A 1252-amino-acid polypeptide reads, in one-letter code: Plasma membrane calcium-transporting ATPase mca-1 (1252 aa).

Over 1–121 the chain is Cytoplasmic; that stretch reads MQKSQNVTAV…VRLVLDACKD (121 aa). A helical transmembrane segment spans residues 122–142; it reads PTLVILVLSGFINLALSFYEP. Topologically, residues 143-180 are extracellular; sequence TSAAEDATQHLVNATTAAILANGTFMSTTEAPSEGHGT. Residues N155 and N164 are each glycosylated (N-linked (GlcNAc...) asparagine). The helical transmembrane segment at 181 to 201 threads the bilayer; that stretch reads AWIEGVAILLCVIVVVLVTAV. The Cytoplasmic portion of the chain corresponds to 202–376; the sequence is NDYSKERQFR…KSVLQAKLSK (175 aa). The interval 330–361 is disordered; the sequence is DDSTSTSSSSSSSSSSSGSSSNGSSDSSKSGD. Low complexity predominate over residues 333 to 357; sequence TSTSSSSSSSSSSSGSSSNGSSDSS. Residues 377 to 397 traverse the membrane as a helical segment; it reads LALQIIYCGTTIAIIALIVLV. Residues 398–422 are Extracellular-facing; the sequence is TRFCLDHYVFEKNEFSLVDIQMFVK. The chain crosses the membrane as a helical span at residues 423–443; sequence FFIIAVTILVISIPEGLPLAI. Ca(2+) contacts are provided by V432, I435, and E437. The Cytoplasmic segment spans residues 444-879; that stretch reads ALALTYSVRK…GRNVYDSISK (436 aa). D479 (4-aspartylphosphate intermediate) is an active-site residue. Positions 479 and 481 each coordinate Mg(2+). The ATP site is built by T481, E553, K612, T733, G734, D735, R792, and K798. D822 is a binding site for Mg(2+). N825 provides a ligand contact to ATP. Residues 880-900 form a helical membrane-spanning segment; it reads FLQFQLTVNVVAVITAFVGAV. N888 lines the Ca(2+) pocket. The Extracellular segment spans residues 901 to 908; the sequence is TVSDSPLK. A helical membrane pass occupies residues 909–929; that stretch reads AVHMLWINLIMDTLASLALAT. N916 and D920 together coordinate Ca(2+). Over 930 to 960 the chain is Cytoplasmic; sequence EQPTDELLERKPYGRKKSLISRTMVKNILCH. Residues 961 to 981 form a helical membrane-spanning segment; that stretch reads ALYQLIIIFVIFFYGDTIFGI. Residues 982 to 989 are Extracellular-facing; it reads KTGLYAPL. Residues 990–1010 form a helical membrane-spanning segment; it reads FAPPSQHFTLVFNAFVMMTVF. Over 1011 to 1035 the chain is Cytoplasmic; sequence NEINARKVHGERNVFKGLASNRVFC. Residues 1036–1056 form a helical membrane-spanning segment; it reads VIWVTTFIAQIIIVQFGGAWF. Residues 1057 to 1065 are Extracellular-facing; it reads STAPLTLQQ. The helical transmembrane segment at 1066–1086 threads the bilayer; sequence WIVCLVLGFSTLIWGQIVATI. At 1087–1252 the chain is on the cytoplasmic side; that stretch reads PSKKLPKAWK…NVDMEDIELN (166 aa). Residues 1124-1142 form a calmodulin-binding subdomain A region; it reads LRRSGKSLWVRGMFIIGNH. The interval 1143 to 1152 is calmodulin-binding subdomain B; the sequence is LRVLRAFGME. Residues 1181 to 1252 form a disordered region; sequence YRHQKHQEKK…NVDMEDIELN (72 aa).

It belongs to the cation transport ATPase (P-type) (TC 3.A.3) family. Type IIB subfamily. As to quaternary structure, interacts with calmodulin.

It is found in the cell membrane. It catalyses the reaction Ca(2+)(in) + ATP + H2O = Ca(2+)(out) + ADP + phosphate + H(+). Its function is as follows. Catalyzes the hydrolysis of ATP coupled with the transport of calcium across a membrane. The polypeptide is Plasma membrane calcium-transporting ATPase mca-1 (Caenorhabditis elegans).